The chain runs to 335 residues: GTPase Obg (335 aa).

Positions 1–158 (MFLDQITIEL…RQVELELKLI (158 aa)) constitute an Obg domain. One can recognise an OBG-type G domain in the interval 159 to 334 (ADIGLVGFPN…LNSLFTNRLS (176 aa)). GTP is bound by residues 165–172 (GFPNAGKS), 190–194 (FTTLQ), 215–218 (DIPG), 285–288 (NKID), and 315–317 (SGL). Positions 172 and 192 each coordinate Mg(2+).

The protein belongs to the TRAFAC class OBG-HflX-like GTPase superfamily. OBG GTPase family. In terms of assembly, monomer. Mg(2+) serves as cofactor.

The protein localises to the cytoplasm. Functionally, an essential GTPase which binds GTP, GDP and possibly (p)ppGpp with moderate affinity, with high nucleotide exchange rates and a fairly low GTP hydrolysis rate. Plays a role in control of the cell cycle, stress response, ribosome biogenesis and in those bacteria that undergo differentiation, in morphogenesis control. The chain is GTPase Obg from Chlamydia caviae (strain ATCC VR-813 / DSM 19441 / 03DC25 / GPIC) (Chlamydophila caviae).